The chain runs to 198 residues: Single-stranded DNA cytosine deaminase (198 aa).

A Bipartite nuclear localization signal motif is present at residues 1–30 (MDSLLMKQRKFLYHFKNVRWAKGRHETYLC). Residues 2 to 26 (DSLLMKQRKFLYHFKNVRWAKGRHE) are interaction with SUPT6H. In terms of domain architecture, CMP/dCMP-type deaminase spans 23 to 129 (GRHETYLCYV…KAEPEGLRRL (107 aa)). Threonine 27 carries the post-translational modification Phosphothreonine; by PKA. Residue serine 38 is modified to Phosphoserine; by PKA. The segment at 39 to 42 (ATSF) is important for interaction with CTNNBL1. Histidine 56 contributes to the Zn(2+) binding site. Catalysis depends on glutamate 58, which acts as the Proton donor. Positions 87 and 90 each coordinate Zn(2+). The segment at 88 to 116 (YDCARHVADFLRGYPNLSLRIFAARLYFC) is required for interaction with RNF126. Residues 183-198 (LYEVDDLRDAFRTLGL) carry the Nuclear export signal motif.

The protein belongs to the cytidine and deoxycytidylate deaminase family. Interacts with CTNNBL1; the interaction is important for the immunoglobulin switch activity of AICDA. Interacts (via its NLS) with KPNA1. Interacts with PKA/PRKACA and PRKAR1A/PKR1. Interacts with SUPT6H, TRIM28 and NCL. Directly interacts with MCM3AP; this interaction may favor AICDA recruitment to immunoglobulin variable region genes, hence promoting somatic hypermutations. It depends on Zn(2+) as a cofactor. Post-translationally, ser-38 is the major site whereas Thr-27 is the minor site of phosphorylation. Phosphorylation regulates its class-switch recombination activity. Probably monoubiquitinated on several residues by RNF126. In terms of tissue distribution, expressed in thymus, lung, spleen, kidney, small intestine, lymph node and tonsil.

It localises to the nucleus. Its subcellular location is the cytoplasm. It carries out the reaction a 2'-deoxycytidine in single-stranded DNA + H2O + H(+) = a 2'-deoxyuridine in single-stranded DNA + NH4(+). In terms of biological role, single-stranded DNA-specific cytidine deaminase. Involved in somatic hypermutation (SHM), gene conversion, and class-switch recombination (CSR) in B-lymphocytes by deaminating C to U during transcription of Ig-variable (V) and Ig-switch (S) region DNA. Required for several crucial steps of B-cell terminal differentiation necessary for efficient antibody responses. May also play a role in the epigenetic regulation of gene expression by participating in DNA demethylation. The polypeptide is Single-stranded DNA cytosine deaminase (AICDA) (Canis lupus familiaris (Dog)).